Here is an 86-residue protein sequence, read N- to C-terminus: Cerebrin prohormone (86 aa).

An N-terminal signal peptide occupies residues 1-27 (MFGYRSLLVLLVTLSLCLLLQSSHCSA). Positions 28–64 (VRTYGNDLDARARREIISLAARLIKLSMYGPEDDSFV) are excised as a propeptide. The residue at position 83 (Ile-83) is an Isoleucine amide.

Expressed only in cerebral ganglion.

The protein resides in the secreted. In terms of biological role, may function as a hormone and may play a neuromodulatory role. This is Cerebrin prohormone (CBPH) from Aplysia californica (California sea hare).